A 172-amino-acid polypeptide reads, in one-letter code: Disulfide bond formation protein B (172 aa).

At 1–13 (MIIRLAGMSVRQG) the chain is on the cytoplasmic side. A helical membrane pass occupies residues 14–30 (CLLGLLMCALMMGVALV). The Periplasmic segment spans residues 31–48 (LQYVYGLTPCPLCIGQRI). A disulfide bridge connects residues C40 and C43. The chain crosses the membrane as a helical span at residues 49 to 65 (AVLLAAFVFAIGALHNP). Residues 66–72 (AGNLGRG) lie on the Cytoplasmic side of the membrane. A helical transmembrane segment spans residues 73–90 (LYAGLAALASVLGLAVAA). Topologically, residues 91-147 (RHVWLQSLPPENVPSCGPGLDYMMEVLPLWDVLSRVLAGSGECAEIHGSLLGMSIPQ) are periplasmic. An intrachain disulfide couples C106 to C133. A helical membrane pass occupies residues 148 to 166 (WTLLGFAVLLLIPLGMLAG). Over 167-172 (IVIRRR) the chain is Cytoplasmic.

The protein belongs to the DsbB family.

Its subcellular location is the cell inner membrane. Required for disulfide bond formation in some periplasmic proteins. Acts by oxidizing the DsbA protein. The protein is Disulfide bond formation protein B of Chromohalobacter salexigens (strain ATCC BAA-138 / DSM 3043 / CIP 106854 / NCIMB 13768 / 1H11).